The chain runs to 778 residues: MDVEGGGGGGGGAPPRGRNSWGWQKGTLLLAYQSFGVVYGDLCISPVYVYKNTFSGKLRLHEEDEEILGVLSLVFWSLTLIPLLKYIILVLGADDNGEGGTFALYSLLCRNSKMGLLNNMRANHGSLSAYNKEEPCKESRNSMLIKAFFEKHYSLRVVLLLFVLMGTSMVIGDGVLTPTMSVLAAVSGLRIKFPELHENYTVLLACVILIGLFALQHYGTRRVGFLFAPILISWLTCIGGIGIYNIIKWNPSVIRALSPYYIYNFFRKAGKDGWSSLGGIVLCLTGAEAMFADLGHFSKLSLRLGFTIVVYPCLVLAYMGEAAYLSKHREDLQSSFYKALPDRVFWPVLFIATLATAVGSQAIISATFSIISQCRALGCFPRIKVVHTSSHVHGQIYIPEVNWVLMSLCLAVTIGFRDTEMIGNAYGLAVILVMCATTCLMFLVITTVWNRWVVWAAAFTVVFGSVELLYLSACLAKVPHGGWLPLLLSLTTLLVMSTWHYGTAMKQQHEVQNKVCLDHFLGLSSGIGLVRVPGVGFVYSSTTNGVPPMFAHFVTNFPAFHRVLIFVSLQTLAVPKVSPEERFLVGRIGSPANRLFRCIVRYGYKEGRWDHFNFENQLLMKVVEFLRHQDGSGGGGGDRMSAAASGEDEAMSVIPATSSSGGSNQHAFDAGTTTSSCEIDATAGGGGRRKVRFDNDGGGGGEEEEEAAEVKELMEEKEAGVSYMIGHTCVFAHESSSAVKKFAVNVVYGFLRRNSRRPAVVLGIPHTSLIEVGMAYRV.

At 1 to 28 the chain is on the cytoplasmic side; it reads MDVEGGGGGGGGAPPRGRNSWGWQKGTL. Residues 29–49 form a helical membrane-spanning segment; the sequence is LLAYQSFGVVYGDLCISPVYV. The Extracellular portion of the chain corresponds to 50–72; it reads YKNTFSGKLRLHEEDEEILGVLS. The chain crosses the membrane as a helical span at residues 73–93; sequence LVFWSLTLIPLLKYIILVLGA. Over 94–156 the chain is Cytoplasmic; it reads DDNGEGGTFA…AFFEKHYSLR (63 aa). A helical membrane pass occupies residues 157-177; the sequence is VVLLLFVLMGTSMVIGDGVLT. Over 178-199 the chain is Extracellular; it reads PTMSVLAAVSGLRIKFPELHEN. N-linked (GlcNAc...) asparagine glycosylation occurs at asparagine 199. Residues 200–220 form a helical membrane-spanning segment; sequence YTVLLACVILIGLFALQHYGT. Residues 221-222 lie on the Cytoplasmic side of the membrane; that stretch reads RR. The helical transmembrane segment at 223-243 threads the bilayer; the sequence is VGFLFAPILISWLTCIGGIGI. Topologically, residues 244 to 276 are extracellular; that stretch reads YNIIKWNPSVIRALSPYYIYNFFRKAGKDGWSS. The chain crosses the membrane as a helical span at residues 277–297; that stretch reads LGGIVLCLTGAEAMFADLGHF. At 298-303 the chain is on the cytoplasmic side; the sequence is SKLSLR. The chain crosses the membrane as a helical span at residues 304-324; sequence LGFTIVVYPCLVLAYMGEAAY. The Extracellular segment spans residues 325-343; the sequence is LSKHREDLQSSFYKALPDR. The helical transmembrane segment at 344 to 364 threads the bilayer; sequence VFWPVLFIATLATAVGSQAII. Residues 365–395 lie on the Cytoplasmic side of the membrane; it reads SATFSIISQCRALGCFPRIKVVHTSSHVHGQ. Residues 396-416 traverse the membrane as a helical segment; that stretch reads IYIPEVNWVLMSLCLAVTIGF. Residues 417–424 lie on the Extracellular side of the membrane; the sequence is RDTEMIGN. A helical transmembrane segment spans residues 425-445; that stretch reads AYGLAVILVMCATTCLMFLVI. The Cytoplasmic portion of the chain corresponds to 446–451; that stretch reads TTVWNR. A helical membrane pass occupies residues 452–472; that stretch reads WVVWAAAFTVVFGSVELLYLS. At 473 to 477 the chain is on the extracellular side; that stretch reads ACLAK. Residues 478–498 form a helical membrane-spanning segment; the sequence is VPHGGWLPLLLSLTTLLVMST. Over 499–778 the chain is Cytoplasmic; the sequence is WHYGTAMKQQ…LIEVGMAYRV (280 aa). Positions 655-677 are enriched in polar residues; it reads PATSSSGGSNQHAFDAGTTTSSC. Residues 655–704 form a disordered region; it reads PATSSSGGSNQHAFDAGTTTSSCEIDATAGGGGRRKVRFDNDGGGGGEEE.

The protein belongs to the HAK/KUP transporter (TC 2.A.72.3) family.

Its subcellular location is the membrane. In terms of biological role, high-affinity potassium transporter. This Oryza sativa subsp. japonica (Rice) protein is Probable potassium transporter 13 (HAK13).